We begin with the raw amino-acid sequence, 879 residues long: Alanine--tRNA ligase (879 aa).

Positions 564, 568, 666, and 670 each coordinate Zn(2+).

The protein belongs to the class-II aminoacyl-tRNA synthetase family. The cofactor is Zn(2+).

It is found in the cytoplasm. The catalysed reaction is tRNA(Ala) + L-alanine + ATP = L-alanyl-tRNA(Ala) + AMP + diphosphate. Functionally, catalyzes the attachment of alanine to tRNA(Ala) in a two-step reaction: alanine is first activated by ATP to form Ala-AMP and then transferred to the acceptor end of tRNA(Ala). Also edits incorrectly charged Ser-tRNA(Ala) and Gly-tRNA(Ala) via its editing domain. This chain is Alanine--tRNA ligase, found in Crocosphaera subtropica (strain ATCC 51142 / BH68) (Cyanothece sp. (strain ATCC 51142)).